The primary structure comprises 140 residues: Nucleoside diphosphate kinase (140 aa).

ATP is bound by residues Lys11, Phe59, Arg87, Thr93, Arg104, and Asn114. The active-site Pros-phosphohistidine intermediate is the His117.

The protein belongs to the NDK family. In terms of assembly, homotetramer. It depends on Mg(2+) as a cofactor.

It is found in the cytoplasm. The catalysed reaction is a 2'-deoxyribonucleoside 5'-diphosphate + ATP = a 2'-deoxyribonucleoside 5'-triphosphate + ADP. It catalyses the reaction a ribonucleoside 5'-diphosphate + ATP = a ribonucleoside 5'-triphosphate + ADP. Major role in the synthesis of nucleoside triphosphates other than ATP. The ATP gamma phosphate is transferred to the NDP beta phosphate via a ping-pong mechanism, using a phosphorylated active-site intermediate. In Bradyrhizobium sp. (strain ORS 278), this protein is Nucleoside diphosphate kinase.